Consider the following 78-residue polypeptide: MSAICQVTGRKPEFGKQVSHSHRRTSRRWNPNVQRRRYYLPSEGRTITLTVSTKGMKIIDRDGIESVVAKIRARGEKI.

Belongs to the bacterial ribosomal protein bL28 family.

This chain is Large ribosomal subunit protein bL28, found in Corynebacterium aurimucosum (strain ATCC 700975 / DSM 44827 / CIP 107346 / CN-1) (Corynebacterium nigricans).